A 104-amino-acid chain; its full sequence is Cytochrome c-551 (104 aa).

Positions 1–22 (MKPYALLSLLATGTLLAQGAWA) are cleaved as a signal peptide. Residues Cys-34, Cys-37, His-38, and Met-83 each coordinate heme c.

Post-translationally, binds 1 heme c group covalently per subunit.

Its subcellular location is the periplasm. In terms of biological role, electron donor for cytochrome cd1 in nitrite and nitrate respiration. The protein is Cytochrome c-551 (nirM) of Pseudomonas aeruginosa (strain ATCC 15692 / DSM 22644 / CIP 104116 / JCM 14847 / LMG 12228 / 1C / PRS 101 / PAO1).